The primary structure comprises 329 residues: 4-hydroxythreonine-4-phosphate dehydrogenase (329 aa).

2 residues coordinate substrate: histidine 136 and threonine 137. A divalent metal cation is bound by residues histidine 166, histidine 211, and histidine 266. The substrate site is built by lysine 274, asparagine 283, and arginine 292.

Belongs to the PdxA family. As to quaternary structure, homodimer. Zn(2+) serves as cofactor. It depends on Mg(2+) as a cofactor. Requires Co(2+) as cofactor.

Its subcellular location is the cytoplasm. It catalyses the reaction 4-(phosphooxy)-L-threonine + NAD(+) = 3-amino-2-oxopropyl phosphate + CO2 + NADH. It functions in the pathway cofactor biosynthesis; pyridoxine 5'-phosphate biosynthesis; pyridoxine 5'-phosphate from D-erythrose 4-phosphate: step 4/5. Its function is as follows. Catalyzes the NAD(P)-dependent oxidation of 4-(phosphooxy)-L-threonine (HTP) into 2-amino-3-oxo-4-(phosphooxy)butyric acid which spontaneously decarboxylates to form 3-amino-2-oxopropyl phosphate (AHAP). The protein is 4-hydroxythreonine-4-phosphate dehydrogenase of Escherichia coli O7:K1 (strain IAI39 / ExPEC).